The sequence spans 166 residues: Endoribonuclease YbeY (166 aa).

Zn(2+) contacts are provided by His129, His133, and His139.

Belongs to the endoribonuclease YbeY family. Zn(2+) is required as a cofactor.

The protein resides in the cytoplasm. Single strand-specific metallo-endoribonuclease involved in late-stage 70S ribosome quality control and in maturation of the 3' terminus of the 16S rRNA. This is Endoribonuclease YbeY from Mesorhizobium japonicum (strain LMG 29417 / CECT 9101 / MAFF 303099) (Mesorhizobium loti (strain MAFF 303099)).